Reading from the N-terminus, the 292-residue chain is Phosphatidylglycerol--prolipoprotein diacylglyceryl transferase (292 aa).

4 helical membrane passes run I7–E27, F45–A65, L83–W103, and I116–I136. R165 contributes to the a 1,2-diacyl-sn-glycero-3-phospho-(1'-sn-glycerol) binding site. The next 2 membrane-spanning stretches (helical) occupy residues P204–V224 and A264–I284.

This sequence belongs to the Lgt family.

Its subcellular location is the cell inner membrane. The enzyme catalyses L-cysteinyl-[prolipoprotein] + a 1,2-diacyl-sn-glycero-3-phospho-(1'-sn-glycerol) = an S-1,2-diacyl-sn-glyceryl-L-cysteinyl-[prolipoprotein] + sn-glycerol 1-phosphate + H(+). It participates in protein modification; lipoprotein biosynthesis (diacylglyceryl transfer). Catalyzes the transfer of the diacylglyceryl group from phosphatidylglycerol to the sulfhydryl group of the N-terminal cysteine of a prolipoprotein, the first step in the formation of mature lipoproteins. This Fervidobacterium nodosum (strain ATCC 35602 / DSM 5306 / Rt17-B1) protein is Phosphatidylglycerol--prolipoprotein diacylglyceryl transferase.